Here is a 1045-residue protein sequence, read N- to C-terminus: Desmoglein-1 (1045 aa).

The N-terminal stretch at 1 to 23 is a signal peptide; the sequence is MNWPFFRTAAVLFIFLVVLEVNS. Residues 24 to 49 constitute a propeptide that is removed on maturation; that stretch reads EFRIQVRDYNTKNGTIKWHSIRRQKR. Asn-36, Asn-110, and Asn-180 each carry an N-linked (GlcNAc...) asparagine glycan. 4 Cadherin domains span residues 50-158, 159-270, 271-385, and 386-496; these read EWIK…PVFS, MSTF…PYME, LPSN…GSVF, and RPGS…TDGA. Residues 50 to 546 are Extracellular-facing; it reads EWIKFAAACR…HPLDNVHFGP (497 aa). A helical transmembrane segment spans residues 547–567; sequence AGIGLLIMGFLVLGLVPFLLM. Residues 568–1045 lie on the Cytoplasmic side of the membrane; it reads YCDCGGAPGG…TKYSTVQYTK (478 aa). Desmoglein repeat repeat units follow at residues 814–840, 841–870, 871–900, 901–928, and 929–957; these read TYPS…TMTE, SYTT…ERVV, GPIS…ERVI, APNS…ERVI, and RPTS…ERVV. The tract at residues 1019–1045 is disordered; sequence FSNTLGSASPTTTRSRITKYSTVQYTK. Positions 1020 to 1045 are enriched in polar residues; sequence SNTLGSASPTTTRSRITKYSTVQYTK.

As to quaternary structure, binds to JUP/plakoglobin. Interacts with PKP2. Interacts with DSC3; there is evidence to suggest that the interaction promotes cell-cell adhesion of keratinocytes.

Its subcellular location is the cell membrane. It localises to the cell junction. It is found in the desmosome. The protein localises to the cytoplasm. The protein resides in the nucleus. Functionally, component of intercellular desmosome junctions. Involved in the interaction of plaque proteins and intermediate filaments mediating cell-cell adhesion. This Sus scrofa (Pig) protein is Desmoglein-1 (DSG1).